Reading from the N-terminus, the 206-residue chain is dCTP deaminase, dUMP-forming (206 aa).

DCTP is bound by residues 117–122 (RSSFGR), Asp135, 143–145 (TLE), Gln163, Tyr177, Lys184, and Gln188. Glu145 functions as the Proton donor/acceptor in the catalytic mechanism.

This sequence belongs to the dCTP deaminase family. Homotrimer.

The enzyme catalyses dCTP + 2 H2O = dUMP + NH4(+) + diphosphate. The protein operates within pyrimidine metabolism; dUMP biosynthesis; dUMP from dCTP: step 1/1. Bifunctional enzyme that catalyzes both the deamination of dCTP to dUTP and the hydrolysis of dUTP to dUMP without releasing the toxic dUTP intermediate. This Methanococcus vannielii (strain ATCC 35089 / DSM 1224 / JCM 13029 / OCM 148 / SB) protein is dCTP deaminase, dUMP-forming.